We begin with the raw amino-acid sequence, 242 residues long: Beta-carotene ketolase (242 aa).

It catalyses the reaction all-trans-beta-carotene + 2 AH2 + 2 O2 = echinenone + 2 A + 3 H2O. The catalysed reaction is echinenone + 2 AH2 + 2 O2 = canthaxanthin + 2 A + 3 H2O. It functions in the pathway carotenoid biosynthesis; astaxanthin biosynthesis. Its function is as follows. Converts beta-carotene to canthaxanthin via echinenone. This chain is Beta-carotene ketolase, found in Paracoccus sp. (strain PC1) (Alcaligenes sp. (strain PC1)).